The chain runs to 217 residues: Probable transaldolase (217 aa).

K83 (schiff-base intermediate with substrate) is an active-site residue.

Belongs to the transaldolase family. Type 3B subfamily.

The protein resides in the cytoplasm. It carries out the reaction D-sedoheptulose 7-phosphate + D-glyceraldehyde 3-phosphate = D-erythrose 4-phosphate + beta-D-fructose 6-phosphate. It functions in the pathway carbohydrate degradation; pentose phosphate pathway; D-glyceraldehyde 3-phosphate and beta-D-fructose 6-phosphate from D-ribose 5-phosphate and D-xylulose 5-phosphate (non-oxidative stage): step 2/3. Transaldolase is important for the balance of metabolites in the pentose-phosphate pathway. The protein is Probable transaldolase of Brucella anthropi (strain ATCC 49188 / DSM 6882 / CCUG 24695 / JCM 21032 / LMG 3331 / NBRC 15819 / NCTC 12168 / Alc 37) (Ochrobactrum anthropi).